Here is a 362-residue protein sequence, read N- to C-terminus: P2Y purinoceptor 1 (362 aa).

The Extracellular segment spans residues 1–40 (MTEALISAALNGTQPELLAGGWAAGNATTKCSLTKTGFQF). N-linked (GlcNAc...) asparagine glycans are attached at residues N11 and N26. 2 disulfide bridges follow: C31–C285 and C113–C191. Position 35 (K35) interacts with ADP. A helical membrane pass occupies residues 41-63 (YYLPTVYILVFITGFLGNSVAIW). Residues 64 to 76 (MFVFHMRPWSGIS) lie on the Cytoplasmic side of the membrane. Residues 77–98 (VYMFNLALADFLYVLTLPALIF) traverse the membrane as a helical segment. The Extracellular segment spans residues 99 to 114 (YYFNKTDWIFGDVMCK). A glycan (N-linked (GlcNAc...) asparagine) is linked at N102. Residues 115–136 (LQRFIFHVNLYGSILFLTCISV) traverse the membrane as a helical segment. The Cytoplasmic segment spans residues 137 to 155 (HRYTGVVHPLKSLGRLKKK). The helical transmembrane segment at 156–177 (NAVYVSSLVWALVVAVIAPILF) threads the bilayer. The Extracellular segment spans residues 178-203 (YSGTGVRRNKTITCYDTTADEYLRSY). N186 is a glycosylation site (N-linked (GlcNAc...) asparagine). ADP is bound at residue 192–194 (YDT). Residues 204 to 226 (FVYSMCTTVFMFCIPFIVILGCY) form a helical membrane-spanning segment. Residues 227–249 (GLIVKALIYKDLDNSPLRRKSIY) are Cytoplasmic-facing. Residues 250 to 273 (LVIIVLTVFAVSYLPFHVMKTLNL) form a helical membrane-spanning segment. Residues 272-276 (NLRAR), 292-295 (YATY), and R299 each bind ADP. At 274 to 292 (RARLDFQTPQMCAFNDKVY) the chain is on the extracellular side. Residues 293 to 314 (ATYQVTRGLASLNSCVDPILYF) form a helical membrane-spanning segment. Topologically, residues 315-362 (LAGDTFRRRLSRATRKSSRRSEPNVQSKSEEMTLNILTEYKQNGDTSL) are cytoplasmic.

Belongs to the G-protein coupled receptor 1 family. Brain, spinal cord, gastrointestinal tract, spleen and leg muscle. Is not detected in the heart, liver, stomach, lung and kidney.

It is found in the cell membrane. Functionally, receptor for extracellular adenine nucleotides such as ADP. In platelets, binding to ADP leads to mobilization of intracellular calcium ions via activation of phospholipase C, a change in platelet shape, and ultimately platelet aggregation. This chain is P2Y purinoceptor 1 (P2RY1), found in Gallus gallus (Chicken).